We begin with the raw amino-acid sequence, 364 residues long: Guanine nucleotide-binding protein alpha-8 subunit (364 aa).

Glycine 2 carries the N-myristoyl glycine lipid modification. The S-palmitoyl cysteine moiety is linked to residue cysteine 5. A G-alpha domain is found at 38–364 (KILKLLILGP…QHTMQKVGIQ (327 aa)). The segment at 41–54 (KLLILGPGESGKST) is G1 motif. GTP contacts are provided by residues 46 to 53 (GPGESGKS), 186 to 192 (LKSRVPT), 211 to 215 (DVGGQ), 280 to 283 (NKID), and alanine 336. Mg(2+) contacts are provided by serine 53 and threonine 192. Positions 184 to 192 (DILKSRVPT) are G2 motif. The tract at residues 207–216 (FRIFDVGGQR) is G3 motif. Residues 276–283 (ILFLNKID) are G4 motif. The segment at 334-339 (TCATDT) is G5 motif.

It belongs to the G-alpha family. G proteins are composed of 3 units; alpha, beta and gamma. The alpha chain contains the guanine nucleotide binding site.

Functionally, guanine nucleotide-binding proteins (G proteins) are involved as modulators or transducers in various transmembrane signaling systems. In Caenorhabditis elegans, this protein is Guanine nucleotide-binding protein alpha-8 subunit (gpa-8).